We begin with the raw amino-acid sequence, 137 residues long: Small ribosomal subunit protein uS12 (137 aa).

The segment at 1–55 (MPTINQLVRKPRQSKIKKSDSPALNKGFNSKKKKFTDLNSPQKRGVCTRVGTMTP) is disordered. Position 102 is a 3-methylthioaspartic acid (Asp102). Residues 118-137 (SGVDGRRQGRSLYGTKKPKN) form a disordered region.

It belongs to the universal ribosomal protein uS12 family. Part of the 30S ribosomal subunit. Contacts proteins S8 and S17. May interact with IF1 in the 30S initiation complex.

With S4 and S5 plays an important role in translational accuracy. Its function is as follows. Interacts with and stabilizes bases of the 16S rRNA that are involved in tRNA selection in the A site and with the mRNA backbone. Located at the interface of the 30S and 50S subunits, it traverses the body of the 30S subunit contacting proteins on the other side and probably holding the rRNA structure together. The combined cluster of proteins S8, S12 and S17 appears to hold together the shoulder and platform of the 30S subunit. The chain is Small ribosomal subunit protein uS12 from Staphylococcus aureus (strain Mu3 / ATCC 700698).